We begin with the raw amino-acid sequence, 84 residues long: uncharacterized protein (84 aa).

The protein belongs to the csb family.

This is an uncharacterized protein from Dictyostelium discoideum (Social amoeba).